The following is a 92-amino-acid chain: Small ribosomal subunit protein bS20 (92 aa).

Positions 1-23 (MANTTSAKKATRKIARRTDVNKA) are disordered.

It belongs to the bacterial ribosomal protein bS20 family.

Its function is as follows. Binds directly to 16S ribosomal RNA. This chain is Small ribosomal subunit protein bS20, found in Rhizobium etli (strain CIAT 652).